The chain runs to 115 residues: MISKPDKNKLRQKRHTRVRGKISGTTETPRLNVFRSNTNIYAQVIDDVTGTTLASASSLKLTGTKTEQAAEVGKLVAEAAKAKGVEEVVFDRGGYLYHGRVAALATAAREAGLKF.

Residues 1 to 24 form a disordered region; sequence MISKPDKNKLRQKRHTRVRGKISG. The span at 10 to 20 shows a compositional bias: basic residues; that stretch reads LRQKRHTRVRG.

This sequence belongs to the universal ribosomal protein uL18 family. As to quaternary structure, part of the 50S ribosomal subunit; part of the 5S rRNA/L5/L18/L25 subcomplex. Contacts the 5S and 23S rRNAs.

Functionally, this is one of the proteins that bind and probably mediate the attachment of the 5S RNA into the large ribosomal subunit, where it forms part of the central protuberance. The protein is Large ribosomal subunit protein uL18 of Lactococcus lactis subsp. cremoris (strain MG1363).